The primary structure comprises 584 residues: FAD-linked oxidoreductase OXR2 (584 aa).

The signal sequence occupies residues 1-22; the sequence is MRSIISAFILSLNFCTQPLVRG. N-linked (GlcNAc...) asparagine glycosylation is found at N75, N97, N115, N225, N302, N321, and N507. Residues 128–310 enclose the FAD-binding PCMH-type domain; it reads LGMLSEKYIA…LNATFKVEPV (183 aa).

Belongs to the oxygen-dependent FAD-linked oxidoreductase family. The cofactor is FAD.

Its pathway is secondary metabolite biosynthesis. In terms of biological role, FAD-linked oxidoreductase; part of the gene cluster that mediates the biosynthesis of a tyrosine-derived cytochalasan acting as a fungal signal recognized by resistant rice plants and leads to avirulence in Pi33 resistant rice cultivars. The first step in the pathway is catalyzed by the hybrid PKS-NRPS ACE1, assisted by the enoyl reductase RAP1, that are responsible for fusion of the tyrosine precursor and the polyketide backbone. The polyketide synthase module (PKS) of ACE1 is responsible for the synthesis of the polyketide backbone and the downstream nonribosomal peptide synthetase (NRPS) amidates the carboxyl end of the polyketide with the tyrosine precursor. Because ACE1 lacks a designated enoylreductase (ER) domain, the required activity is provided the enoyl reductase RAP1. Reduction by the hydrolyase ORFZ, followed by dehydration and intra-molecular Diels-Alder cyclization by the Diels-Alderase ORF3 then yield the required isoindolone-fused macrocycle. A number of oxidative steps catalyzed by the tailoring enzymes identified within the cluster, including cytochrome P450 monooxygenases CYP1 to CYP4, the FAD-linked oxidoreductase OXR2 and the short-chain dehydrogenase/reductase OXR1, are further required to afford the final cytochalasans that confer avirulence and which have still to be identified. The monooxygenase CYP1 has been shown to be a site-selective C-18 hydroxylase whereas the function of CYP3 is the site-selective epoxidation of the C-6/C-7 olefin that is present in some intermediate compounds. Finally, SYN2 and RAP2 are not required for avirulence in Pi33 resistant rice cultivars. In Pyricularia oryzae (strain 70-15 / ATCC MYA-4617 / FGSC 8958) (Rice blast fungus), this protein is FAD-linked oxidoreductase OXR2.